A 314-amino-acid polypeptide reads, in one-letter code: (-)-isopiperitenone reductase (314 aa).

Residue 10-33 coordinates NADP(+); it reads VTGANKGIGFEICRQLAEKGIIVI. Residue serine 182 coordinates substrate.

It belongs to the short-chain dehydrogenases/reductases (SDR) family.

It is found in the cytoplasm. It catalyses the reaction (2R,5R)-isopulegone + NADP(+) = (6R)-isopiperitenone + NADPH + H(+). It participates in secondary metabolite biosynthesis; terpenoid biosynthesis. In terms of biological role, monoterpene synthase that catalyzes the specific reduction of the 1(2)-double bond of (-)-isopiperitenone to produce (+)-cis-isopulegone. Does not catalyze the reverse reaction. Unable to reduce (+)-pulegone, (+)-cis-isopulegone, (-)-menthone or the 1,2-double bond of (-)-carvone. Able to utilize NADH with 20% the efficiency of NADPH. This Mentha piperita (Peppermint) protein is (-)-isopiperitenone reductase.